The primary structure comprises 910 residues: Protein kinase 3 (910 aa).

Residues 119 to 129 (SPSGGGGGGSG) show a composition bias toward gly residues. 3 disordered regions span residues 119 to 239 (SPSG…PNLI), 270 to 295 (FNNN…KTPT), and 391 to 454 (NKDD…NDKK). Low complexity-rich tracts occupy residues 130–160 (VSSN…QPTS), 169–196 (LSES…QSTS), 209–220 (GLSGSSTSSSSA), 227–239 (NNNA…PNLI), 270–290 (FNNN…TTST), and 422–450 (INQP…TSQT). Residues 498–763 (FELLKVLGVG…FEEISSHPFF (266 aa)) form the Protein kinase domain. Residues 504-512 (LGVGSFGRV) and Lys-527 contribute to the ATP site. Asp-621 serves as the catalytic Proton acceptor. The residue at position 664 (Thr-664) is a Phosphothreonine; by autocatalysis. Residues 764–854 (ELIPWRMLES…NKEEEDGIMG (91 aa)) enclose the AGC-kinase C-terminal domain. 2 disordered regions span residues 786-812 (EISL…TLSC) and 859-910 (IGSI…KGSV). Composition is skewed to low complexity over residues 788 to 809 (SLPN…NNLT) and 859 to 886 (IGSI…SGGS).

Belongs to the protein kinase superfamily. AGC Ser/Thr protein kinase family.

The catalysed reaction is L-seryl-[protein] + ATP = O-phospho-L-seryl-[protein] + ADP + H(+). The enzyme catalyses L-threonyl-[protein] + ATP = O-phospho-L-threonyl-[protein] + ADP + H(+). The sequence is that of Protein kinase 3 (pkgC) from Dictyostelium discoideum (Social amoeba).